Here is a 745-residue protein sequence, read N- to C-terminus: Inhibitor of nuclear factor kappa-B kinase subunit alpha (745 aa).

Residues 15–300 (WEMRERLGTG…IDLTLKQPRC (286 aa)) form the Protein kinase domain. ATP-binding positions include 21–29 (LGTGGFGNV) and Lys-44. Thr-23 is modified (phosphothreonine; by PKB/AKT1 and SGK1). Asp-144 acts as the Proton acceptor in catalysis. Phosphoserine; by MAP3K14 is present on Ser-176. Ser-180 is subject to Phosphoserine; by SGK1. The interval 455–476 (LLRYNANLTKMKNTLISASQQL) is leucine-zipper. An NEMO-binding region spans residues 738 to 743 (LDWSWL).

This sequence belongs to the protein kinase superfamily. Ser/Thr protein kinase family. I-kappa-B kinase subfamily. Component of the I-kappa-B-kinase (IKK) core complex consisting of CHUK, IKBKB and IKBKG; probably four alpha/CHUK-beta/IKBKB dimers are associated with four gamma/IKBKG subunits. The IKK core complex seems to associate with regulatory or adapter proteins to form a IKK-signalosome holo-complex. The IKK complex associates with TERF2IP/RAP1, leading to promote IKK-mediated phosphorylation of RELA/p65. Part of a complex composed of NCOA2, NCOA3, CHUK/IKKA, IKBKB, IKBKG and CREBBP. Part of a 70-90 kDa complex at least consisting of CHUK/IKKA, IKBKB, NFKBIA, RELA, ELP1 and MAP3K14. Directly interacts with TRPC4AP. May interact with TRAF2. Interacts with NALP2. May interact with MAVS/IPS1. Interacts with ARRB1 and ARRB2. Interacts with NLRC5; prevents CHUK phosphorylation and kinase activity. Interacts with PIAS1; this interaction induces PIAS1 phosphorylation. Interacts with ZNF268 isoform 2; the interaction is further increased in a TNF-alpha-dependent manner. Interacts with LRRC14. Interacts with SASH1. Directly interacts with DDX3X after the physiological activation of the TLR7 and TLR8 pathways; this interaction enhances CHUK autophosphorylation. Post-translationally, ubiquitinated by TRIM56 via 'Lys-63'-linked ubiquitination, promoting activation of CHUK/IKKA. In terms of processing, phosphorylated by MAP3K14/NIK, AKT and to a lesser extent by MEKK1, and dephosphorylated by PP2A. Autophosphorylated. In terms of tissue distribution, ubiquitous only for isoform 1, isoforms 2 and 3 are expressed predominantly in brain and T-lymphocytes.

It is found in the cytoplasm. The protein localises to the nucleus. It catalyses the reaction L-seryl-[I-kappa-B protein] + ATP = O-phospho-L-seryl-[I-kappa-B protein] + ADP + H(+). Its activity is regulated as follows. Activated when phosphorylated and inactivated when dephosphorylated. Serine kinase that plays an essential role in the NF-kappa-B signaling pathway which is activated by multiple stimuli such as inflammatory cytokines, bacterial or viral products, DNA damages or other cellular stresses. Acts as a part of the canonical IKK complex in the conventional pathway of NF-kappa-B activation and phosphorylates inhibitors of NF-kappa-B on serine residues. These modifications allow polyubiquitination of the inhibitors and subsequent degradation by the proteasome. In turn, free NF-kappa-B is translocated into the nucleus and activates the transcription of hundreds of genes involved in immune response, growth control, or protection against apoptosis. Negatively regulates the pathway by phosphorylating the scaffold protein TAXBP1 and thus promoting the assembly of the A20/TNFAIP3 ubiquitin-editing complex (composed of A20/TNFAIP3, TAX1BP1, and the E3 ligases ITCH and RNF11). Therefore, CHUK plays a key role in the negative feedback of NF-kappa-B canonical signaling to limit inflammatory gene activation. As part of the non-canonical pathway of NF-kappa-B activation, the MAP3K14-activated CHUK/IKKA homodimer phosphorylates NFKB2/p100 associated with RelB, inducing its proteolytic processing to NFKB2/p52 and the formation of NF-kappa-B RelB-p52 complexes. In turn, these complexes regulate genes encoding molecules involved in B-cell survival and lymphoid organogenesis. Also participates in the negative feedback of the non-canonical NF-kappa-B signaling pathway by phosphorylating and destabilizing MAP3K14/NIK. Within the nucleus, phosphorylates CREBBP and consequently increases both its transcriptional and histone acetyltransferase activities. Modulates chromatin accessibility at NF-kappa-B-responsive promoters by phosphorylating histones H3 at 'Ser-10' that are subsequently acetylated at 'Lys-14' by CREBBP. Additionally, phosphorylates the CREBBP-interacting protein NCOA3. Also phosphorylates FOXO3 and may regulate this pro-apoptotic transcription factor. Phosphorylates RIPK1 at 'Ser-25' which represses its kinase activity and consequently prevents TNF-mediated RIPK1-dependent cell death. Phosphorylates AMBRA1 following mitophagy induction, promoting AMBRA1 interaction with ATG8 family proteins and its mitophagic activity. The chain is Inhibitor of nuclear factor kappa-B kinase subunit alpha (Chuk) from Mus musculus (Mouse).